The chain runs to 138 residues: Cysteine desulfuration protein SufE (138 aa).

The Cysteine persulfide intermediate role is filled by cysteine 51.

The protein belongs to the SufE family. As to quaternary structure, homodimer. Interacts with SufS.

Its subcellular location is the cytoplasm. It functions in the pathway cofactor biosynthesis; iron-sulfur cluster biosynthesis. Participates in cysteine desulfuration mediated by SufS. Cysteine desulfuration mobilizes sulfur from L-cysteine to yield L-alanine and constitutes an essential step in sulfur metabolism for biosynthesis of a variety of sulfur-containing biomolecules. Functions as a sulfur acceptor for SufS, by mediating the direct transfer of the sulfur atom from the S-sulfanylcysteine of SufS, an intermediate product of cysteine desulfuration process. This is Cysteine desulfuration protein SufE from Escherichia coli O6:K15:H31 (strain 536 / UPEC).